Consider the following 419-residue polypeptide: Mitogen-activated protein kinase pmk-2 (419 aa).

A Protein kinase domain is found at 49–350; the sequence is YNSLKPLGEG…VSSALRHDYL (302 aa). Residues 55–63 and lysine 78 each bind ATP; that span reads LGEGAYGVV. The active-site Proton acceptor is the aspartate 210. Threonine 222 is modified (phosphothreonine). The short motif at 222–224 is the TXY element; sequence TGY. Tyrosine 224 carries the phosphotyrosine modification.

The protein belongs to the protein kinase superfamily. CMGC Ser/Thr protein kinase family. MAP kinase subfamily. Mg(2+) serves as cofactor. Dually phosphorylated on Thr-222 and Tyr-224, which activates the enzyme.

It is found in the cytoplasm. The enzyme catalyses L-seryl-[protein] + ATP = O-phospho-L-seryl-[protein] + ADP + H(+). It carries out the reaction L-threonyl-[protein] + ATP = O-phospho-L-threonyl-[protein] + ADP + H(+). With respect to regulation, activated by phosphorylation on threonine and tyrosine. Inhibited by pyridinyl-imidazole related compounds. Responds to activation by environmental stress and pro-inflammatory cytokines by phosphorylating downstream targets. The polypeptide is Mitogen-activated protein kinase pmk-2 (pmk-2) (Caenorhabditis elegans).